The sequence spans 140 residues: Putative pre-16S rRNA nuclease (140 aa).

It belongs to the YqgF nuclease family.

It is found in the cytoplasm. Its function is as follows. Could be a nuclease involved in processing of the 5'-end of pre-16S rRNA. The sequence is that of Putative pre-16S rRNA nuclease from Halalkalibacterium halodurans (strain ATCC BAA-125 / DSM 18197 / FERM 7344 / JCM 9153 / C-125) (Bacillus halodurans).